Reading from the N-terminus, the 159-residue chain is Lipoprotein signal peptidase (159 aa).

Helical transmembrane passes span 4-24 (PYFV…DQVT), 64-84 (MSFF…FYIK), and 88-108 (GNFL…GNFI). Residues aspartate 118 and aspartate 136 contribute to the active site. The helical transmembrane segment at 131–151 (IFNGADSSLTIGVILVLIALL) threads the bilayer.

This sequence belongs to the peptidase A8 family.

The protein resides in the cell membrane. It catalyses the reaction Release of signal peptides from bacterial membrane prolipoproteins. Hydrolyzes -Xaa-Yaa-Zaa-|-(S,diacylglyceryl)Cys-, in which Xaa is hydrophobic (preferably Leu), and Yaa (Ala or Ser) and Zaa (Gly or Ala) have small, neutral side chains.. The protein operates within protein modification; lipoprotein biosynthesis (signal peptide cleavage). This protein specifically catalyzes the removal of signal peptides from prolipoproteins. The sequence is that of Lipoprotein signal peptidase from Staphylococcus carnosus (strain TM300).